The following is a 287-amino-acid chain: uncharacterized protein (287 aa).

The tract at residues 1–23 is disordered; it reads MTVSDSPAQRQTPPQTPGGTAPR. A compositionally biased stretch (low complexity) spans 7 to 23; it reads PAQRQTPPQTPGGTAPR. Positions 31, 33, and 204 each coordinate Mg(2+).

Belongs to the HAD-like hydrolase superfamily. SerB family.

This is an uncharacterized protein from Mycobacterium tuberculosis (strain CDC 1551 / Oshkosh).